The sequence spans 380 residues: Succinyl-diaminopimelate desuccinylase (380 aa).

H69 contributes to the Zn(2+) binding site. D71 is a catalytic residue. D102 provides a ligand contact to Zn(2+). E135 serves as the catalytic Proton acceptor. Residues E136, E164, and H353 each coordinate Zn(2+).

This sequence belongs to the peptidase M20A family. DapE subfamily. As to quaternary structure, homodimer. Zn(2+) is required as a cofactor. Requires Co(2+) as cofactor.

The enzyme catalyses N-succinyl-(2S,6S)-2,6-diaminopimelate + H2O = (2S,6S)-2,6-diaminopimelate + succinate. It participates in amino-acid biosynthesis; L-lysine biosynthesis via DAP pathway; LL-2,6-diaminopimelate from (S)-tetrahydrodipicolinate (succinylase route): step 3/3. In terms of biological role, catalyzes the hydrolysis of N-succinyl-L,L-diaminopimelic acid (SDAP), forming succinate and LL-2,6-diaminopimelate (DAP), an intermediate involved in the bacterial biosynthesis of lysine and meso-diaminopimelic acid, an essential component of bacterial cell walls. In Cereibacter sphaeroides (strain ATCC 17029 / ATH 2.4.9) (Rhodobacter sphaeroides), this protein is Succinyl-diaminopimelate desuccinylase.